Here is a 658-residue protein sequence, read N- to C-terminus: Glycine--tRNA ligase beta subunit (658 aa).

Belongs to the class-II aminoacyl-tRNA synthetase family. Tetramer of two alpha and two beta subunits.

It localises to the cytoplasm. It catalyses the reaction tRNA(Gly) + glycine + ATP = glycyl-tRNA(Gly) + AMP + diphosphate. This chain is Glycine--tRNA ligase beta subunit, found in Rickettsia bellii (strain OSU 85-389).